A 266-amino-acid polypeptide reads, in one-letter code: Energy-coupling factor transporter ATP-binding protein EcfA1 (266 aa).

The ABC transporter domain maps to 2–237 (IKLNNVTFRY…EKIIEIAKIA (236 aa)). 37-44 (GHNGSGKS) lines the ATP pocket.

The protein belongs to the ABC transporter superfamily. Energy-coupling factor EcfA family. As to quaternary structure, forms a stable energy-coupling factor (ECF) transporter complex composed of 2 membrane-embedded substrate-binding proteins (S component), 2 ATP-binding proteins (A component) and 2 transmembrane proteins (T component).

Its subcellular location is the cell membrane. Its function is as follows. ATP-binding (A) component of a common energy-coupling factor (ECF) ABC-transporter complex. Unlike classic ABC transporters this ECF transporter provides the energy necessary to transport a number of different substrates. The chain is Energy-coupling factor transporter ATP-binding protein EcfA1 from Mycoplasmopsis synoviae (strain 53) (Mycoplasma synoviae).